We begin with the raw amino-acid sequence, 39 residues long: Photosystem II reaction center protein J (39 aa).

Residues 7-27 (IPLWLVATIAGLGVIAVLGLF) traverse the membrane as a helical segment.

It belongs to the PsbJ family. As to quaternary structure, PSII is composed of 1 copy each of membrane proteins PsbA, PsbB, PsbC, PsbD, PsbE, PsbF, PsbH, PsbI, PsbJ, PsbK, PsbL, PsbM, PsbT, PsbX, PsbY, PsbZ, Psb30/Ycf12, peripheral proteins PsbO, CyanoQ (PsbQ), PsbU, PsbV and a large number of cofactors. It forms dimeric complexes.

The protein localises to the cellular thylakoid membrane. One of the components of the core complex of photosystem II (PSII). PSII is a light-driven water:plastoquinone oxidoreductase that uses light energy to abstract electrons from H(2)O, generating O(2) and a proton gradient subsequently used for ATP formation. It consists of a core antenna complex that captures photons, and an electron transfer chain that converts photonic excitation into a charge separation. In Microcystis aeruginosa (strain NIES-843 / IAM M-2473), this protein is Photosystem II reaction center protein J.